Reading from the N-terminus, the 142-residue chain is Large ribosomal subunit protein bL17 (142 aa).

It belongs to the bacterial ribosomal protein bL17 family. As to quaternary structure, part of the 50S ribosomal subunit. Contacts protein L32.

The polypeptide is Large ribosomal subunit protein bL17 (Chlamydia felis (strain Fe/C-56) (Chlamydophila felis)).